The following is a 976-amino-acid chain: Serine/threonine-protein kinase CLA4 (976 aa).

The disordered stretch occupies residues 1–46 (MTSIYTSDLKNHRRAPPPPNGAAGSGSGSSSGSGSGSGSGSGSGSL). Over residues 23-43 (AGSGSGSSSGSGSGSGSGSGS) the composition is skewed to gly residues. The region spanning 73 to 184 (SKRQSGWVHV…WLDAFTTKCP (112 aa)) is the PH domain. The disordered stretch occupies residues 207 to 231 (LTNGSLNGNSSSSPTSGLSSSSVLT). A CRIB domain is found at 237 to 250 (VSGPINFTHKVHVG). Disordered stretches follow at residues 298-522 (GGNS…KIHP) and 559-658 (SKKS…QLKK). 2 stretches are compositionally biased toward low complexity: residues 313-332 (NSKT…AKNN) and 371-411 (LNGS…PLNN). The segment covering 430–440 (SGTSSDTYSNK) has biased composition (polar residues). A compositionally biased stretch (basic and acidic residues) spans 441–455 (NHQDRSGYEQQRQQR). Low complexity predominate over residues 456–487 (TDSSQQQQQQQKQHQYQQKSQQQQQQPLSSHQ). The segment covering 496–505 (QVPPTLPSSG) has biased composition (pro residues). Over residues 559-583 (SKKSQQQLASKQPSPPSSQQQQQKP) the composition is skewed to low complexity. Residues 622-635 (NETSGVSKTPSPTD) show a composition bias toward polar residues. The 256-residue stretch at 685–940 (FRIVEKAGQG…TDELLEHSFI (256 aa)) folds into the Protein kinase domain. Residues 691–699 (AGQGASGNV) and lysine 715 each bind ATP. Aspartate 808 (proton acceptor) is an active-site residue.

The protein belongs to the protein kinase superfamily. STE Ser/Thr protein kinase family. STE20 subfamily. In terms of assembly, interacts (via the CRIB domain) with CDC42.

It carries out the reaction L-seryl-[protein] + ATP = O-phospho-L-seryl-[protein] + ADP + H(+). The enzyme catalyses L-threonyl-[protein] + ATP = O-phospho-L-threonyl-[protein] + ADP + H(+). In terms of biological role, ser/Thr kinase required for wild-type filamentous growth, chlamydospore formation, and virulence in mouse systemic infection. In Candida albicans (strain SC5314 / ATCC MYA-2876) (Yeast), this protein is Serine/threonine-protein kinase CLA4 (CLA4).